Reading from the N-terminus, the 367-residue chain is Glutamate 5-kinase (367 aa).

ATP is bound at residue Lys17. Substrate contacts are provided by Ser57, Asp144, and Asn156. Residues 176 to 177 (SD) and 217 to 223 (TGGMTSK) contribute to the ATP site. In terms of domain architecture, PUA spans 279–357 (AGALTLDEGA…SELPGELRRP (79 aa)).

This sequence belongs to the glutamate 5-kinase family.

The protein resides in the cytoplasm. It catalyses the reaction L-glutamate + ATP = L-glutamyl 5-phosphate + ADP. It functions in the pathway amino-acid biosynthesis; L-proline biosynthesis; L-glutamate 5-semialdehyde from L-glutamate: step 1/2. Its function is as follows. Catalyzes the transfer of a phosphate group to glutamate to form L-glutamate 5-phosphate. The polypeptide is Glutamate 5-kinase (Mycobacterium avium (strain 104)).